Reading from the N-terminus, the 861-residue chain is DNA mismatch repair protein MutS (861 aa).

617–624 (GPNMGGKS) is an ATP binding site. The segment at 799 to 822 (ETTSLPHEQPPAAKAKDAPQVPHQ) is disordered. Positions 808-820 (PPAAKAKDAPQVP) are enriched in low complexity.

Belongs to the DNA mismatch repair MutS family.

This protein is involved in the repair of mismatches in DNA. It is possible that it carries out the mismatch recognition step. This protein has a weak ATPase activity. The chain is DNA mismatch repair protein MutS from Pseudomonas putida (strain GB-1).